The chain runs to 127 residues: Glycine cleavage system H protein (127 aa).

The Lipoyl-binding domain maps to 22–104; it reads KVRIGITDFA…YEKAWMIVVE (83 aa). Position 63 is an N6-lipoyllysine (Lys63).

Belongs to the GcvH family. In terms of assembly, the glycine cleavage system is composed of four proteins: P, T, L and H. (R)-lipoate is required as a cofactor.

The glycine cleavage system catalyzes the degradation of glycine. The H protein shuttles the methylamine group of glycine from the P protein to the T protein. Functionally, is also involved in protein lipoylation via its role as an octanoyl/lipoyl carrier protein intermediate. In Bacillus licheniformis (strain ATCC 14580 / DSM 13 / JCM 2505 / CCUG 7422 / NBRC 12200 / NCIMB 9375 / NCTC 10341 / NRRL NRS-1264 / Gibson 46), this protein is Glycine cleavage system H protein.